Here is a 106-residue protein sequence, read N- to C-terminus: uncharacterized protein (106 aa).

One can recognise an HTH hxlR-type domain in the interval 1-93 (MSIFYVLGKK…WEAKWKEAKI (93 aa)).

This is an uncharacterized protein from Methanocaldococcus jannaschii (strain ATCC 43067 / DSM 2661 / JAL-1 / JCM 10045 / NBRC 100440) (Methanococcus jannaschii).